Consider the following 204-residue polypeptide: Quinol oxidase subunit 3 (204 aa).

5 consecutive transmembrane segments (helical) span residues 27–47, 66–86, 95–115, 140–160, and 184–204; these read FWIF…TFFV, LVMI…IAVH, GVVI…GCEI, LLGT…GILI, and FLDV…LGGL.

The protein belongs to the cytochrome c oxidase subunit 3 family.

Its subcellular location is the cell membrane. It catalyses the reaction 2 a quinol + O2 = 2 a quinone + 2 H2O. Catalyzes quinol oxidation with the concomitant reduction of oxygen to water. Major component for energy conversion during vegetative growth. In Bacillus spizizenii (strain ATCC 23059 / NRRL B-14472 / W23) (Bacillus subtilis subsp. spizizenii), this protein is Quinol oxidase subunit 3 (qoxC).